A 73-amino-acid polypeptide reads, in one-letter code: Omega-conotoxin GVIA (73 aa).

A signal peptide spans 1-22; sequence MKLTCVVIVAVLLLTACQLITA. The propeptide occupies 23–45; that stretch reads DDSRGTQKHRALGSTTELSLSTR. Disulfide bonds link Cys-46–Cys-61, Cys-53–Cys-64, and Cys-60–Cys-71. 4-hydroxyproline is present on residues Pro-49, Pro-55, and Pro-66. Tyr-72 carries the tyrosine amide; in form omega-conotoxin GVIA modification.

Belongs to the conotoxin O1 superfamily. Expressed by the venom duct.

The protein localises to the secreted. Omega-conotoxins act at presynaptic membranes, they bind and block voltage-gated calcium channels (Cav). This toxin blocks N-type calcium channels (Cav2.2/CACNA1B) with a high potency (it displaces [125I]GVIA with an IC(50)=3.7-38 pM). This chain is Omega-conotoxin GVIA, found in Conus geographus (Geography cone).